Reading from the N-terminus, the 473-residue chain is Sulfhydrylase-like protein lolC2 (473 aa).

An N6-(pyridoxal phosphate)lysine modification is found at Lys226.

It belongs to the trans-sulfuration enzymes family. Pyridoxal 5'-phosphate serves as cofactor.

The protein operates within alkaloid biosynthesis. Functionally, sulfhydrylase-like protein; part of the gene cluster that mediates the biosynthesis of loline alkaloids, potent insecticidal agents composed of a pyrrolizidine ring system and an uncommon ether bridge linking carbons 2 and 7. Lolines are structurally differentiated by the various modifications of the L-amino group and include norloline, loline, N-methylloline, N-acetylloline, N-acetylnorloline, and N-formylloline. The first committed step is the condensation of O-acetyl-L-homoserine (derived from L-aspartic acid) and L-proline, probably catalyzed by the gamma-type pyridoxal 5'-phosphate(PLP)-dependent enzyme lolC, to give the diamino diacid, NACPP. Ensuing cyclization, decarboxylation, and acetylation steps yield 1-exo-acetamidopyrrolizidine (AcAP). LolO is required for installation of the ether bridge upon the pathway intermediate, 1-exo-acetamidopyrrolizidine (AcAP). In sequential 2-oxoglutarate- and O(2)-consuming steps, lolO removes hydrogens from C2 and C7 of AcAP to form both carbon-oxygen bonds in N-acetylnorloline (NANL), the precursor to all other lolines. The enzymes lolD, lolE, lolF and lolT have also been proposed to be involved in the ether-bridge installation. Further processing of the exocyclic moiety of NANL by fungal N-acetamidase (LolN), methyltransferase (LolM), and cytochrome P450 (LolP) enzymes, with occasional involvement of a plant acetyltransferase, generates the other known lolines. LolN transforms NANL to norlonine which is monomethylated and dimethylated to respectively lonine and N-methyllonine (NML) by lolM. LolP catalyzes hydroxylation of the methyl group in N-methylloline (NML) and further oxygenation to N-formylloline (NFL). A plant acetyltransferase is responsible for the acetylation of loline to form N-acetylloline (NAL). LolA might interact with aspartate kinase to prevent feedback inhibition of its activity by these end products and thereby promote production of L-homoserine from L-aspartate. The sequence is that of Sulfhydrylase-like protein lolC2 from Epichloe uncinata (Endophyte fungus).